Reading from the N-terminus, the 102-residue chain is Large ribosomal subunit protein bL21 (102 aa).

This sequence belongs to the bacterial ribosomal protein bL21 family. Part of the 50S ribosomal subunit. Contacts protein L20.

Its function is as follows. This protein binds to 23S rRNA in the presence of protein L20. This Campylobacter hominis (strain ATCC BAA-381 / DSM 21671 / CCUG 45161 / LMG 19568 / NCTC 13146 / CH001A) protein is Large ribosomal subunit protein bL21.